Reading from the N-terminus, the 246-residue chain is 5'-nucleotidase SurE (246 aa).

Residues aspartate 8, aspartate 9, serine 39, and asparagine 91 each contribute to the a divalent metal cation site.

It belongs to the SurE nucleotidase family. A divalent metal cation serves as cofactor.

The protein resides in the cytoplasm. The catalysed reaction is a ribonucleoside 5'-phosphate + H2O = a ribonucleoside + phosphate. In terms of biological role, nucleotidase that shows phosphatase activity on nucleoside 5'-monophosphates. The polypeptide is 5'-nucleotidase SurE (Dechloromonas aromatica (strain RCB)).